A 146-amino-acid polypeptide reads, in one-letter code: UPF0260 protein Ssed_2516 (146 aa).

Belongs to the UPF0260 family.

The sequence is that of UPF0260 protein Ssed_2516 from Shewanella sediminis (strain HAW-EB3).